The chain runs to 399 residues: Large envelope protein (399 aa).

Position 1 is an N-acetylmethionine (Met1). Gly2 carries the N-myristoyl glycine; by host lipid modification. Residues 2-118 are pre-S1; sequence GLSWTVPLEW…PPLRDTHPQA (117 aa). The segment at 2–173 is pre-S; it reads GLSWTVPLEW…FSRIGDPAPN (172 aa). At 2–180 the chain is on the virion surface; in external conformation side; that stretch reads GLSWTVPLEW…APNMESITSG (179 aa). The Intravirion; in internal conformation segment spans residues 2–252; the sequence is GLSWTVPLEW…PGYRWMCLRR (251 aa). A glycan (N-linked (GlcNAc...) asparagine) is linked at Ser4. Residues 85–110 form a disordered region; that stretch reads KTLPADPPPASTNRQSGRQPTPITPP. Residues 95–105 show a composition bias toward polar residues; that stretch reads STNRQSGRQPT. Residues 119–173 are pre-S2; that stretch reads MQWNSTTFHQALQDPRVRGLYFPAGGSSSGTVNPVPTTASLISSIFSRIGDPAPN. The helical transmembrane segment at 181 to 201 threads the bilayer; that stretch reads FLGPLLVLQAGFFLLTKILTI. Over 202 to 252 the chain is Intravirion; in external conformation; sequence PQSLDSWWTSLNFLGGAPVCLGQNSQSPTSNHSPTSCPPICPGYRWMCLRR. A helical transmembrane segment spans residues 253-273; that stretch reads FIIFLFILLLCLIFLLVLLDY. Over 274–347 the chain is Virion surface; the sequence is QGMLPVCPLI…WASARFSWLS (74 aa). A glycan (N-linked (GlcNAc...) asparagine; by host) is linked at Asn319. A helical transmembrane segment spans residues 348–368; it reads LLVPFVQWFAGLSPTVWLSVI. Residues 369–374 lie on the Intravirion side of the membrane; the sequence is WMMWYW. The chain crosses the membrane as a helical span at residues 375 to 397; it reads GPSLYDILSPFIPLLPIFFCLWV. Over 398 to 399 the chain is Virion surface; the sequence is YI.

Belongs to the orthohepadnavirus major surface antigen family. In terms of assembly, in its internal form (Li-HBsAg), interacts with the capsid protein and with the isoform S. Interacts with host chaperone CANX. Associates with host chaperone CANX through its pre-S2 N glycan; this association may be essential for isoform M proper secretion. As to quaternary structure, interacts with isoform L. Interacts with the antigens of satellite virus HDV (HDVAgs); this interaction is required for encapsidation of HDV genomic RNA. Isoform M is N-terminally acetylated by host at a ratio of 90%, and N-glycosylated by host at the pre-S2 region. Post-translationally, myristoylated.

The protein resides in the virion membrane. Its function is as follows. The large envelope protein exists in two topological conformations, one which is termed 'external' or Le-HBsAg and the other 'internal' or Li-HBsAg. In its external conformation the protein attaches the virus to cell receptors and thereby initiating infection. This interaction determines the species specificity and liver tropism. This attachment induces virion internalization predominantly through caveolin-mediated endocytosis. The large envelope protein also assures fusion between virion membrane and endosomal membrane. In its internal conformation the protein plays a role in virion morphogenesis and mediates the contact with the nucleocapsid like a matrix protein. Functionally, the middle envelope protein plays an important role in the budding of the virion. It is involved in the induction of budding in a nucleocapsid independent way. In this process the majority of envelope proteins bud to form subviral lipoprotein particles of 22 nm of diameter that do not contain a nucleocapsid. The chain is Large envelope protein from Homo sapiens (Human).